A 550-amino-acid chain; its full sequence is Eukaryotic translation initiation factor 3 subunit D-2 (550 aa).

Residues 108 to 152 (RTRGRTGRGTPNIASLGGSTAGGATASTTKYGKGRHTRNTQNVGR) are disordered. Low complexity predominate over residues 115–136 (RGTPNIASLGGSTAGGATASTT). Residues 290–304 (QFDLLTVNETSVEPP) form an RNA gate region. Residues 527–550 (PENAFDSDRDEEESSEPLSNSNDN) are disordered.

Belongs to the eIF-3 subunit D family. In terms of assembly, component of the eukaryotic translation initiation factor 3 (eIF-3) complex. The eIF-3 complex interacts with pix.

It is found in the cytoplasm. MRNA cap-binding component of the eukaryotic translation initiation factor 3 (eIF-3) complex, which is involved in protein synthesis of a specialized repertoire of mRNAs and, together with other initiation factors, stimulates binding of mRNA and methionyl-tRNAi to the 40S ribosome. The eIF-3 complex specifically targets and initiates translation of a subset of mRNAs involved in cell proliferation. In the eIF-3 complex, eif3d specifically recognizes and binds the 7-methylguanosine cap of a subset of mRNAs. The protein is Eukaryotic translation initiation factor 3 subunit D-2 of Drosophila sechellia (Fruit fly).